The primary structure comprises 348 residues: Haptoglobin-related protein (348 aa).

The not cleaved signal peptide spans 1–18 (MSDLGAVISLLLWGRQLF). A Sushi domain is found at 34 to 87 (FPKPPEIANGYVEHLFRYQCKNYYRLRTEGDGVYTLNDKKQWINKAVGDKLPEC). A Peptidase S1 domain is found at 104–346 (ILGGHLDAKG…IQHWVQKTIA (243 aa)). 2 cysteine pairs are disulfide-bonded: cysteine 251-cysteine 282 and cysteine 293-cysteine 323.

The protein belongs to the peptidase S1 family. In adult liver the amount of HPR mRNA is at the lower limit of detection, therefore the extent of its expression is at most less than 1000-fold that of the HP1F gene. No HPR mRNA can be detected in fetal liver. Expressed in Hep-G2 and leukemia MOLT-4 cell lines.

It localises to the secreted. Its function is as follows. Primate-specific plasma protein associated with apolipoprotein L-I (apoL-I)-containing high-density lipoprotein (HDL). This HDL particle, termed trypanosome lytic factor-1 (TLF-1), mediates human innate immune protection against many species of African trypanosomes. Binds hemoglobin with high affinity and may contribute to the clearance of cell-free hemoglobin to allow hepatic recycling of heme iron. This chain is Haptoglobin-related protein (HPR), found in Homo sapiens (Human).